A 91-amino-acid chain; its full sequence is Gem-associated protein 7 homolog (91 aa).

Residues leucine 18–glutamine 86 form the Sm domain.

The protein belongs to the gemin-7 family. Part of the core SMN complex at least composed of smn1, yip11/gem2, gem6, gem7 and gem8. Interacts with gem6; the interaction is direct. Interacts with gem8; the interaction is direct.

The chain is Gem-associated protein 7 homolog from Schizosaccharomyces pombe (strain 972 / ATCC 24843) (Fission yeast).